The primary structure comprises 332 residues: Ketol-acid reductoisomerase (NADP(+)) (332 aa).

The KARI N-terminal Rossmann domain occupies 2 to 182 (AKVYIDKDAS…GATRAGVIET (181 aa)). Residues 25 to 28 (YGSQ), serine 53, and 83 to 86 (DMVQ) each bind NADP(+). The active site involves histidine 108. NADP(+) is bound at residue glycine 134. Residues 183-328 (TFKEETETDL…RQIREISLRG (146 aa)) form the KARI C-terminal knotted domain. Mg(2+)-binding residues include aspartate 191, glutamate 195, glutamate 227, and glutamate 231. Serine 252 contacts substrate.

This sequence belongs to the ketol-acid reductoisomerase family. Requires Mg(2+) as cofactor.

The catalysed reaction is (2R)-2,3-dihydroxy-3-methylbutanoate + NADP(+) = (2S)-2-acetolactate + NADPH + H(+). It catalyses the reaction (2R,3R)-2,3-dihydroxy-3-methylpentanoate + NADP(+) = (S)-2-ethyl-2-hydroxy-3-oxobutanoate + NADPH + H(+). It participates in amino-acid biosynthesis; L-isoleucine biosynthesis; L-isoleucine from 2-oxobutanoate: step 2/4. Its pathway is amino-acid biosynthesis; L-valine biosynthesis; L-valine from pyruvate: step 2/4. In terms of biological role, involved in the biosynthesis of branched-chain amino acids (BCAA). Catalyzes an alkyl-migration followed by a ketol-acid reduction of (S)-2-acetolactate (S2AL) to yield (R)-2,3-dihydroxy-isovalerate. In the isomerase reaction, S2AL is rearranged via a Mg-dependent methyl migration to produce 3-hydroxy-3-methyl-2-ketobutyrate (HMKB). In the reductase reaction, this 2-ketoacid undergoes a metal-dependent reduction by NADPH to yield (R)-2,3-dihydroxy-isovalerate. This chain is Ketol-acid reductoisomerase (NADP(+)), found in Sulfurisphaera tokodaii (strain DSM 16993 / JCM 10545 / NBRC 100140 / 7) (Sulfolobus tokodaii).